Consider the following 985-residue polypeptide: Cation channel sperm-associated auxiliary subunit epsilon (985 aa).

The N-terminal stretch at 1–35 is a signal peptide; it reads MPSAGQRKPGSLLALQALQKWLLRGGVGAMLARQV. The Extracellular portion of the chain corresponds to 36-937; the sequence is VAALLLWLSC…ESLGMIPRSS (902 aa). 4 disulfides stabilise this stretch: C87-C101, C130-C235, C275-C365, and C439-C442. N-linked (GlcNAc...) asparagine glycosylation is found at N91, N143, and N292. N502, N517, and N565 each carry an N-linked (GlcNAc...) asparagine glycan. 4 disulfide bridges follow: C617–C724, C737–C919, C753–C786, and C838–C869. Residue N749 is glycosylated (N-linked (GlcNAc...) asparagine). N-linked (GlcNAc...) asparagine glycosylation occurs at N830. N-linked (GlcNAc...) asparagine glycosylation is found at N888, N915, and N920. Residues 938–958 traverse the membrane as a helical segment; the sequence is VYLVAALIFVLMLTFISILVL. Topologically, residues 959–985 are cytoplasmic; the sequence is SYFWYLKIYRQFIIEPLHKRPAKQKKN.

This sequence belongs to the CATSPERD family. Component of the CatSper complex or CatSpermasome composed of the core pore-forming members CATSPER1, CATSPER2, CATSPER3 and CATSPER4 as well as auxiliary members CATSPERB, CATSPERG2, CATSPERD, CATSPERE, CATSPERZ, C2CD6/CATSPERT, SLCO6C1, TMEM249, TMEM262 and EFCAB9. HSPA1 may be an additional auxiliary complex member. The core complex members CATSPER1, CATSPER2, CATSPER3 and CATSPER4 form a heterotetrameric channel. The auxiliary CATSPERB, CATSPERG2, CATSPERD and CATSPERE subunits form a pavilion-like structure over the pore which stabilizes the complex through interactions with CATSPER4, CATSPER3, CATSPER1 and CATSPER2 respectively. SLCO6C1 interacts with CATSPERE and TMEM262/CATSPERH interacts with CATSPERB, further stabilizing the complex. C2CD6/CATSPERT interacts at least with CATSPERD and is required for targeting the CatSper complex in the flagellar membrane. Testis-specific.

The protein localises to the cell projection. The protein resides in the cilium. It localises to the flagellum membrane. Functionally, auxiliary component of the CatSper complex, a complex involved in sperm cell hyperactivation. Sperm cell hyperactivation is needed for sperm motility which is essential late in the preparation of sperm for fertilization. The polypeptide is Cation channel sperm-associated auxiliary subunit epsilon (Mus musculus (Mouse)).